Consider the following 188-residue polypeptide: MTKLENPVLMATIGGAQGLRGEVRAKAYTADPTALGDYGLLHSTDGRSFEILEIREMKNVVVVRFRGINDRNAAEALNGLELYIERDNLPDEELEDDEFYYADLEGLEALDDKGVSYGTVTGVFDFGAGDLLELKGPGKRPVLIPFSEASVLEIDLEAGTLLIDPLAAGLVDDPELSQFTAGKPKKKK.

The PRC barrel domain occupies 96–169; that stretch reads DDEFYYADLE…TLLIDPLAAG (74 aa).

It belongs to the RimM family. In terms of assembly, binds ribosomal protein uS19.

It localises to the cytoplasm. In terms of biological role, an accessory protein needed during the final step in the assembly of 30S ribosomal subunit, possibly for assembly of the head region. Essential for efficient processing of 16S rRNA. May be needed both before and after RbfA during the maturation of 16S rRNA. It has affinity for free ribosomal 30S subunits but not for 70S ribosomes. This Rhizobium etli (strain ATCC 51251 / DSM 11541 / JCM 21823 / NBRC 15573 / CFN 42) protein is Ribosome maturation factor RimM.